The sequence spans 518 residues: uncharacterized protein (518 aa).

The first 21 residues, M1 to G21, serve as a signal peptide directing secretion. N-linked (GlcNAc...) asparagine glycosylation is found at N30, N142, N295, N342, N362, N410, and N503. One can recognise a CUB domain in the interval C389–Q517.

It localises to the secreted. This is an uncharacterized protein from Caenorhabditis elegans.